We begin with the raw amino-acid sequence, 565 residues long: MTTREFDYIICGAGSAGNVLATRLTEDPDVTVLLLEAGGPDYRFDFRTQMPAALAYPLQGRRYNWAYETDPEPHMNNRRMECGRGKGLGGSSLINGMCYIRGNALDYDNWSTHKGLEDWTYLDCLPYFRKAETRDVGPNDYHGGDGPVSVTTSKPGVNPLFEAMVEAGVQAGYPRTDDLNGYQQEGFGPMDRTVTPRGRRASTARGYLDQARARPNLEIVTHALADRILFSGKRATGVTFLHGSARVTAHARREVLVCSGAIASPQLLQRSGVGPGEWLRELDIPVVLDLPGVGRNLQDHLEMYIQFECKEPVSLYPALKWWNQPKIGLDWMINGTGLGASNHFEAGGFIRTRDDDLWPNIQYHFLPVAINYNGSNAIEMHGFQAHVGSMRSPSRGRVKLKSRDPNAHPSILFNYMAEALDWREFRDAIRATREIMHQPALDRFRGRELNPGADLKSDNELDAFVRARAETAFHPSCSCKMGYDDMAVVDNEGRVHGIDGLRVVDASIMPIITTGNLNAPTIMIAEKIADKIRKRKPLERSNARYYVANGAPARGGKPARAPAAV.

Residue 7 to 36 coordinates FAD; it reads DYIICGAGSAGNVLATRLTEDPDVTVLLLE. The active-site Proton acceptor is histidine 474.

The protein belongs to the GMC oxidoreductase family. Requires FAD as cofactor.

The enzyme catalyses choline + A = betaine aldehyde + AH2. The catalysed reaction is betaine aldehyde + NAD(+) + H2O = glycine betaine + NADH + 2 H(+). It functions in the pathway amine and polyamine biosynthesis; betaine biosynthesis via choline pathway; betaine aldehyde from choline (cytochrome c reductase route): step 1/1. Involved in the biosynthesis of the osmoprotectant glycine betaine. Catalyzes the oxidation of choline to betaine aldehyde and betaine aldehyde to glycine betaine at the same rate. The protein is Oxygen-dependent choline dehydrogenase of Burkholderia thailandensis (strain ATCC 700388 / DSM 13276 / CCUG 48851 / CIP 106301 / E264).